The primary structure comprises 152 residues: uncharacterized protein (152 aa).

Residues 7 to 133 (PALSPHLVVD…FGHHWSLGQP (127 aa)) form the VOC domain.

This is an uncharacterized protein from Mycobacterium bovis (strain ATCC BAA-935 / AF2122/97).